A 1969-amino-acid chain; its full sequence is Cytadherence high molecular weight protein 1 (1969 aa).

An HAT 1 repeat occupies Tyr-148–Lys-166. The tract at residues Lys-174–Gly-244 is disordered. Acidic residues-rich tracts occupy residues Glu-179–Glu-207 and Gln-214–Gly-242. HAT repeat units lie at residues Tyr-258–Val-278, Ala-300–Tyr-331, and Tyr-333–Val-353. Residues Gln-294–Gly-319 are disordered. The tract at residues Val-365 to Val-393 is disordered. The segment covering Val-374–Ala-387 has biased composition (acidic residues). HAT repeat units lie at residues Tyr-477–Ile-497 and Leu-959–Asn-997. A coiled-coil region spans residues Ser-1000 to Glu-1027. Residues Glu-1029–Gln-1067 form an HAT 7 repeat. Coiled-coil stretches lie at residues Ile-1082 to Phe-1190, Ser-1547 to Thr-1621, and Asn-1758 to Val-1790.

The protein resides in the cell projection. Its subcellular location is the attachment organelle membrane. Functionally, component of the cytoskeleton-like structure which stabilizes the shape of the wall-less Mycoplasma. This cytoskeleton-like network of accessory proteins containing HMW proteins 1 to 5 allows the proper anchoring of cytadhesin proteins in the mycoplasmal membrane at the attachment organelle. This chain is Cytadherence high molecular weight protein 1 (hlp1), found in Mycoplasmoides gallisepticum (strain R(low / passage 15 / clone 2)) (Mycoplasma gallisepticum).